A 716-amino-acid chain; its full sequence is Cyclic nucleotide-gated ion channel 1 (716 aa).

Over 1-97 (MNFRQEKFVR…QGPFLQRWNK (97 aa)) the chain is Cytoplasmic. The chain crosses the membrane as a helical span at residues 98-118 (IFVLACIIAVSLDPLFFYVPI). Over 119-132 (IDDAKKCLGIDKKM) the chain is Extracellular. Residues 133-153 (EITASVLRSFTDVFYVLHIIF) form a helical membrane-spanning segment. The Cytoplasmic portion of the chain corresponds to 154–187 (QFRTGFIAPSSRVFGRGVLVEDKREIAKRYLSSH). A helical membrane pass occupies residues 188-208 (FIIDILAVLPLPQMVILIIIP). The Extracellular segment spans residues 209-220 (HMRGSSSLNTKN). The helical transmembrane segment at 221-241 (MLKFIVFFQYIPRFIRIYPLY) threads the bilayer. The Cytoplasmic portion of the chain corresponds to 242–259 (KEVTRTSGILTETAWAGA). A helical transmembrane segment spans residues 260–280 (AFNLFLYMLASHVFGAFWYLF). The Extracellular segment spans residues 281 to 379 (SIERETVCWK…GQNLKTSTYI (99 aa)). A helical transmembrane segment spans residues 380–400 (WEICFAVFISIAGLVLFSFLI). The Cytoplasmic segment spans residues 401–716 (GNMQTYLQST…PAEPDFNSDD (316 aa)). A nucleoside 3',5'-cyclic phosphate-binding positions include 486-610 (MFEK…SKQL) and E557. Residues 602 to 617 (FRRLHSKQLRHTFRYY) form a calmodulin-binding region. In terms of domain architecture, IQ spans 622–651 (KTWAACFIQAAWRRYIKKKLEESLKEEENR). Positions 689-716 (SVRKPRMPERMPPMLLQKPAEPDFNSDD) are disordered.

The protein belongs to the cyclic nucleotide-gated cation channel (TC 1.A.1.5) family. Homotetramer or heterotetramer (Potential). Binds calmodulin-2/3/5 with a higher affinity than calmodulin-1/4. As to expression, expressed in the whole plant but only weakly in roots.

The protein resides in the cell membrane. Functionally, acts as a cyclic nucleotide-gated ion channel. Can be activated by cyclic AMP which leads to an opening of the cation channel. May be responsible for cAMP-induced calcium entry in cells and thus should be involved in the calcium signal transduction. Could transport K(+), Na(+) and Pb(2+). This Arabidopsis thaliana (Mouse-ear cress) protein is Cyclic nucleotide-gated ion channel 1 (CNGC1).